Reading from the N-terminus, the 473-residue chain is Photosystem II CP43 reaction center protein (473 aa).

The propeptide occupies Met1 to Glu14. The residue at position 15 (Thr15) is an N-acetylthreonine. A Phosphothreonine modification is found at Thr15. The next 5 helical transmembrane spans lie at Leu69 to Ala93, Ile134 to Asn155, Lys178 to Thr200, Lys255 to Ser275, and Trp291 to Ala312. A [CaMn4O5] cluster-binding site is contributed by Glu367. Residues Arg447–Pro471 form a helical membrane-spanning segment.

This sequence belongs to the PsbB/PsbC family. PsbC subfamily. In terms of assembly, PSII is composed of 1 copy each of membrane proteins PsbA, PsbB, PsbC, PsbD, PsbE, PsbF, PsbH, PsbI, PsbJ, PsbK, PsbL, PsbM, PsbT, PsbX, PsbY, PsbZ, Psb30/Ycf12, at least 3 peripheral proteins of the oxygen-evolving complex and a large number of cofactors. It forms dimeric complexes. The cofactor is Binds multiple chlorophylls and provides some of the ligands for the Ca-4Mn-5O cluster of the oxygen-evolving complex. It may also provide a ligand for a Cl- that is required for oxygen evolution. PSII binds additional chlorophylls, carotenoids and specific lipids..

It is found in the plastid. The protein resides in the chloroplast thylakoid membrane. One of the components of the core complex of photosystem II (PSII). It binds chlorophyll and helps catalyze the primary light-induced photochemical processes of PSII. PSII is a light-driven water:plastoquinone oxidoreductase, using light energy to abstract electrons from H(2)O, generating O(2) and a proton gradient subsequently used for ATP formation. The polypeptide is Photosystem II CP43 reaction center protein (Chaetosphaeridium globosum (Charophycean green alga)).